Reading from the N-terminus, the 189-residue chain is Transcription factor FapR (189 aa).

The protein belongs to the FapR family.

In terms of biological role, transcriptional factor involved in regulation of membrane lipid biosynthesis by repressing genes involved in fatty acid and phospholipid metabolism. The chain is Transcription factor FapR from Listeria monocytogenes serotype 4a (strain HCC23).